The following is a 253-amino-acid chain: Histone H1.4 (253 aa).

Low complexity predominate over residues 1-33; that stretch reads MSDVAVAADTTETPAAPTKASKATKASKATKAS. The interval 1–43 is disordered; the sequence is MSDVAVAADTTETPAAPTKASKATKASKATKASKATKAKTTKV. Residue serine 2 is modified to N-acetylserine. An H15 domain is found at 51–127; that stretch reads AHPPFINMVT…GANGRFRLAE (77 aa). Positions 134–253 are disordered; it reads KSPAAAKKDA…KKAPAAAPEA (120 aa). Basic and acidic residues-rich tracts occupy residues 139–149 and 188–200; these read AKKDATGEKKA and AAGD…EVKV. Composition is skewed to basic residues over residues 201 to 210 and 234 to 244; these read KKVKSPKKIA and APKKAAAKPAK.

Belongs to the histone H1/H5 family.

The protein localises to the nucleus. Its subcellular location is the chromosome. Functionally, histones H1 are necessary for the condensation of nucleosome chains into higher-order structures. This Caenorhabditis elegans protein is Histone H1.4 (hil-4).